The sequence spans 266 residues: Non-structural maintenance of chromosomes element 1 homolog (266 aa).

The segment at 1-102 (MQGNTRRTGV…SVSKMASDFA (102 aa)) is interaction with NSMCE3. The segment at 191-232 (CNICRSLLIQGQSCETCGIRMHLPCVAKYFQSSSEPHCPHCN) adopts an RING-type; atypical zinc-finger fold. The segment covering 243-252 (FDPEKERETG) has biased composition (basic and acidic residues). The interval 243 to 266 (FDPEKERETGMSRSNKRPSRSRQH) is disordered. A compositionally biased stretch (basic residues) spans 256-266 (SNKRPSRSRQH).

This sequence belongs to the NSE1 family. As to quaternary structure, component of the SMC5-SMC6 complex which consists at least of SMC5, SMC6, NSMCE2, NSMCE1, NSMCE4A or EID3 and NSMCE3. NSMCE1, NSMCE4A or EID3 and NSMCE3 probably form a subcomplex that bridges the head domains of the SMC5-SMC6 heterodimer. Interacts with NSMCE3. In terms of processing, ubiquitinated.

The protein localises to the nucleus. It is found in the chromosome. Its subcellular location is the telomere. It carries out the reaction S-ubiquitinyl-[E2 ubiquitin-conjugating enzyme]-L-cysteine + [acceptor protein]-L-lysine = [E2 ubiquitin-conjugating enzyme]-L-cysteine + N(6)-ubiquitinyl-[acceptor protein]-L-lysine.. In terms of biological role, RING-type zinc finger-containing E3 ubiquitin ligase that assembles with melanoma antigen protein (MAGE) to catalyze the direct transfer of ubiquitin from E2 ubiquitin-conjugating enzyme to a specific substrate. Within MAGE-RING ubiquitin ligase complex, MAGE stimulates and specifies ubiquitin ligase activity likely through recruitment and/or stabilization of the E2 ubiquitin-conjugating enzyme at the E3:substrate complex. Involved in maintenance of genome integrity, DNA damage response and DNA repair. NSMCE3/MAGEG1 and NSMCE1 ubiquitin ligase are components of SMC5-SMC6 complex and may positively regulate homologous recombination-mediated DNA repair. The polypeptide is Non-structural maintenance of chromosomes element 1 homolog (NSMCE1) (Bos taurus (Bovine)).